The following is a 366-amino-acid chain: DNA-directed RNA polymerase subunit alpha (366 aa).

The alpha N-terminal domain (alpha-NTD) stretch occupies residues Met1–Glu260. The tract at residues Glu274–Asp366 is alpha C-terminal domain (alpha-CTD).

It belongs to the RNA polymerase alpha chain family. In terms of assembly, homodimer. The RNAP catalytic core consists of 2 alpha, 1 beta, 1 beta' and 1 omega subunit. When a sigma factor is associated with the core the holoenzyme is formed, which can initiate transcription.

The catalysed reaction is RNA(n) + a ribonucleoside 5'-triphosphate = RNA(n+1) + diphosphate. DNA-dependent RNA polymerase catalyzes the transcription of DNA into RNA using the four ribonucleoside triphosphates as substrates. The sequence is that of DNA-directed RNA polymerase subunit alpha from Anaplasma marginale (strain St. Maries).